The sequence spans 816 residues: MSRPQGLLWLPLLFTPVCVMLNSNVLLWLTALAIKFTLIDSQAQYPVVNTNYGKIRGLRTPLPNEILGPVEQYLGVPYASPPTGERRFQPPEPPSSWTGIRNTTQFAAVCPQHLDERSLLHDMLPIWFTANLDTLMTYVQDQNEDCLYLNIYVPTEDDIHDQNSKKPVMVYIHGGSYMEGTGNMIDGSILASYGNVIVITINYRLGILGFLSTGDQAAKGNYGLLDQIQALRWIEENVGAFGGDPKRVTIFGSGAGASCVSLLTLSHYSEGLFQKAIIQSGTALSSWAVNYQPAKYTRILADKVGCNMLDTTDMVECLRNKNYKELIQQTITPATYHIAFGPVIDGDVIPDDPQILMEQGEFLNYDIMLGVNQGEGLKFVDGIVDNEDGVTPNDFDFSVSNFVDNLYGYPEGKDTLRETIKFMYTDWADKENPETRRKTLVALFTDHQWVAPAVATADLHAQYGSPTYFYAFYHHCQSEMKPSWADSAHGDEVPYVFGIPMIGPTELFSCNFSKNDVMLSAVVMTYWTNFAKTGDPNQPVPQDTKFIHTKPNRFEEVAWSKYNPKDQLYLHIGLKPRVRDHYRATKVAFWLELVPHLHNLNEIFQYVSTTTKVPPPDMTSFPYGTRRSPAKIWPTTKRPAITPANNPKHSKDPHKTGPEDTTVLIETKRDYSTELSVTIAVGASLLFLNILAFAALYYKKDKRRHETHRRPSPQRNTTNDIAHIQNEEIMSLQMKQLEHDHECESLQAHDTLRLTCPPDYTLTLRRSPDDIPLMTPNTITMIPNTLTGMQPLHTFNTFSGGQNSTNLPHGHSTTRV.

The first 41 residues, methionine 1–serine 41, serve as a signal peptide directing secretion. The Extracellular segment spans residues glutamine 42–serine 676. Residue asparagine 102 is glycosylated (N-linked (GlcNAc...) asparagine). 2 disulfide bridges follow: cysteine 110–cysteine 146 and cysteine 306–cysteine 317. The tract at residues glutamine 359–asparagine 364 is interaction with NRXN1. Cysteine 476 and cysteine 510 are joined by a disulfide. An N-linked (GlcNAc...) asparagine glycan is attached at asparagine 511. The segment at threonine 636–glutamate 659 is disordered. Over residues histidine 649–proline 658 the composition is skewed to basic and acidic residues. A helical membrane pass occupies residues valine 677–tyrosine 697. At tyrosine 698–valine 816 the chain is on the cytoplasmic side. The residue at position 712 (serine 712) is a Phosphoserine.

This sequence belongs to the type-B carboxylesterase/lipase family. Homodimer. Interacts with NRXN1 in a calcium-dependent manner. Interaction with neurexins is mediated by heparan sulfate glycan modification on neurexin. Interacts through its C-terminus with DLG4/PSD-95 third PDZ domain. Expressed at highest levels in heart. Expressed at lower levels in liver, skeletal muscle and pancreas and at very low levels in brain.

It is found in the cell membrane. Its subcellular location is the postsynaptic density membrane. Functionally, cell surface protein involved in cell-cell-interactions via its interactions with neurexin family members. The protein is Neuroligin-4, X-linked (NLGN4X) of Homo sapiens (Human).